We begin with the raw amino-acid sequence, 154 residues long: Ribosome maturation factor RimP (154 aa).

Belongs to the RimP family.

Its subcellular location is the cytoplasm. Required for maturation of 30S ribosomal subunits. The protein is Ribosome maturation factor RimP of Hydrogenobaculum sp. (strain Y04AAS1).